We begin with the raw amino-acid sequence, 229 residues long: MDSLDRSCQDWCDRKQHWLEIGPPDLVERKGSLTLRSHHKKYSKPVLVYSWHRDREAFPKGYDIEGPEKVKKLCNSTYRRLGTDESPIWTSETHEKLSQMCLNTEWVEMKSKALLNEETVSSGIIERVTGLPATGFGAVFPRHPPDWSKMCALTTYSEDYVPPYDYQPHAYPCQDDYSIVHRKCRSQFTDLNGSKRFGINTWHDESGIYANSDVKQKLYPLTSGPIVPI.

Over methionine 1–glycine 123 the chain is Extracellular. Residue asparagine 75 is glycosylated (N-linked (GlcNAc...) asparagine). Residues isoleucine 124 to phenylalanine 140 traverse the membrane as a helical segment. Topologically, residues proline 141 to isoleucine 229 are cytoplasmic. The mn stretch occupies residues leucine 153 to proline 163.

Microtubule inner protein component of sperm flagellar doublet microtubules. Interacts with MYH9. Interacts with MYH10. In terms of tissue distribution, expressed in undifferentiated embryonic stem cells. Expressed in airway epithelial cells.

Its subcellular location is the cytoplasm. The protein resides in the cytoskeleton. The protein localises to the cilium axoneme. It is found in the flagellum axoneme. It localises to the cell membrane. In terms of biological role, microtubule inner protein (MIP) part of the dynein-decorated doublet microtubules (DMTs) in cilia axoneme, which is required for motile cilia beating. The sequence is that of Cilia- and flagella-associated protein 95 from Homo sapiens (Human).